An 807-amino-acid polypeptide reads, in one-letter code: Ecotropic viral integration site 5 ortholog (807 aa).

Positions 1–31 (MTLTTTTTASSAESQAKMDVKGGALPGEENL) are disordered. Thr-33 carries the phosphothreonine modification. 2 positions are modified to phosphoserine: Ser-58 and Ser-64. Residues 116–300 (GIPHHFRAIV…RIMDVFLSEG (185 aa)) enclose the Rab-GAP TBC domain. Coiled coils occupy residues 352–463 (SIKL…ENNV), 494–583 (CLLE…ENQR), and 627–772 (REME…RGKF).

In terms of assembly, interacts with Rab11.

It is found in the cytoplasm. It localises to the endosome. In terms of biological role, functions as a GTPase-activating protein (GAP). During border cell migration in the ovary, acts as a GAP for Rab11 and is necessary for the maintenance of active receptor tyrosine kinases at the leading edge. In Drosophila melanogaster (Fruit fly), this protein is Ecotropic viral integration site 5 ortholog (Evi5).